A 239-amino-acid chain; its full sequence is Leucine-rich repeat-containing protein 57 (239 aa).

The N-myristoyl glycine moiety is linked to residue G2. LRR repeat units follow at residues 39 to 60 (NLRT…LIGK), 63 to 84 (LLKS…ICNL), 86 to 107 (KLET…FGQL), 109 to 131 (ALKT…CSLR), 132 to 153 (HLDV…VGEL), 154 to 175 (QVIE…ISCC), 177 to 197 (RLKI…PQSI), and 202 to 222 (QICL…RELE).

The protein resides in the membrane. This Homo sapiens (Human) protein is Leucine-rich repeat-containing protein 57 (LRRC57).